Reading from the N-terminus, the 328-residue chain is PhoH-like protein (328 aa).

135–142 (GPAGTGKT) lines the ATP pocket.

This sequence belongs to the PhoH family.

The protein localises to the cytoplasm. The polypeptide is PhoH-like protein (Synechocystis sp. (strain ATCC 27184 / PCC 6803 / Kazusa)).